Consider the following 640-residue polypeptide: Chaperone protein DnaK (640 aa).

A Phosphothreonine; by autocatalysis modification is found at Thr199. The segment at 603–640 (YTQQAEEPQPQKEEGKAAEEDVVDAEFEEVKEDKNKAS) is disordered. The span at 611–621 (QPQKEEGKAAE) shows a compositional bias: basic and acidic residues. Positions 622 to 632 (EDVVDAEFEEV) are enriched in acidic residues.

It belongs to the heat shock protein 70 family.

Acts as a chaperone. The sequence is that of Chaperone protein DnaK from Nitrosococcus oceani (strain ATCC 19707 / BCRC 17464 / JCM 30415 / NCIMB 11848 / C-107).